The chain runs to 488 residues: Type II restriction enzyme HgaI (488 aa).

It carries out the reaction Endonucleolytic cleavage of DNA to give specific double-stranded fragments with terminal 5'-phosphates.. Its function is as follows. An S subtype restriction enzyme that recognizes the double-stranded sequences 5'-GACGC-3' and 5'-GCGTC-3' and cleaves respectively 10 bases after G-1 and 10 bases before G'-1. This chain is Type II restriction enzyme HgaI (hgaIR), found in Avibacterium volantium (Pasteurella volantium).